A 392-amino-acid chain; its full sequence is L-rhamnonate dehydratase (392 aa).

Substrate is bound by residues histidine 22 and arginine 48. Residues aspartate 214, glutamate 240, and glutamate 268 each contribute to the Mg(2+) site. Catalysis depends on histidine 318, which acts as the Proton acceptor. Substrate is bound at residue glutamate 338.

Belongs to the mandelate racemase/muconate lactonizing enzyme family. RhamD subfamily. Homooctamer; tetramer of dimers. It depends on Mg(2+) as a cofactor.

It carries out the reaction L-rhamnonate = 2-dehydro-3-deoxy-L-rhamnonate + H2O. In terms of biological role, catalyzes the dehydration of L-rhamnonate to 2-keto-3-deoxy-L-rhamnonate (KDR). The sequence is that of L-rhamnonate dehydratase from Burkholderia ambifaria (strain ATCC BAA-244 / DSM 16087 / CCUG 44356 / LMG 19182 / AMMD) (Burkholderia cepacia (strain AMMD)).